Here is a 296-residue protein sequence, read N- to C-terminus: 33 kDa chaperonin (296 aa).

2 disulfides stabilise this stretch: C238–C240 and C271–C274.

This sequence belongs to the HSP33 family. Post-translationally, under oxidizing conditions two disulfide bonds are formed involving the reactive cysteines. Under reducing conditions zinc is bound to the reactive cysteines and the protein is inactive.

Its subcellular location is the cytoplasm. Its function is as follows. Redox regulated molecular chaperone. Protects both thermally unfolding and oxidatively damaged proteins from irreversible aggregation. Plays an important role in the bacterial defense system toward oxidative stress. The polypeptide is 33 kDa chaperonin (Clostridium botulinum (strain ATCC 19397 / Type A)).